Reading from the N-terminus, the 122-residue chain is Small ribosomal subunit protein uS13 (122 aa).

The segment at 97–122 (PVRGQRTHTNARTRKGPAKAIAGKKK) is disordered.

The protein belongs to the universal ribosomal protein uS13 family. As to quaternary structure, part of the 30S ribosomal subunit. Forms a loose heterodimer with protein S19. Forms two bridges to the 50S subunit in the 70S ribosome.

Located at the top of the head of the 30S subunit, it contacts several helices of the 16S rRNA. In the 70S ribosome it contacts the 23S rRNA (bridge B1a) and protein L5 of the 50S subunit (bridge B1b), connecting the 2 subunits; these bridges are implicated in subunit movement. Contacts the tRNAs in the A and P-sites. The protein is Small ribosomal subunit protein uS13 of Brucella anthropi (strain ATCC 49188 / DSM 6882 / CCUG 24695 / JCM 21032 / LMG 3331 / NBRC 15819 / NCTC 12168 / Alc 37) (Ochrobactrum anthropi).